Consider the following 438-residue polypeptide: Protein ROOT INITIATION DEFECTIVE 3 (438 aa).

WD repeat units follow at residues 36–74, 76–115, 118–157, 171–212, 214–253, and 261–300; these read AHGL…AEVK, YPVE…LLKK, GHYR…DDFQ, EHTM…LLKN, IFPS…EYGT, and EKGK…HVRT. The stretch at 394-434 forms a coiled coil; sequence AATEMEMERLKLEYKRSLQMNEQWQKNYENLLQVVMEEEQI.

In terms of biological role, involved in meristem development. Acts as a negative regulator of the CUC-STM pathway in shoot apical meristem (SAM) neo-formation. This Arabidopsis thaliana (Mouse-ear cress) protein is Protein ROOT INITIATION DEFECTIVE 3 (RID3).